We begin with the raw amino-acid sequence, 104 residues long: Nucleoid-associated protein DICTH_1981 (104 aa).

Residues 85-104 are disordered; that stretch reads KSAEKMGSLADGLPLPPGLF.

The protein belongs to the YbaB/EbfC family. As to quaternary structure, homodimer.

The protein resides in the cytoplasm. It localises to the nucleoid. Binds to DNA and alters its conformation. May be involved in regulation of gene expression, nucleoid organization and DNA protection. This is Nucleoid-associated protein DICTH_1981 from Dictyoglomus thermophilum (strain ATCC 35947 / DSM 3960 / H-6-12).